We begin with the raw amino-acid sequence, 159 residues long: Ribosomal RNA large subunit methyltransferase H (159 aa).

S-adenosyl-L-methionine-binding positions include Leu76, Gly108, and 127-132 (FSKMTF).

It belongs to the RNA methyltransferase RlmH family. In terms of assembly, homodimer.

The protein localises to the cytoplasm. It carries out the reaction pseudouridine(1915) in 23S rRNA + S-adenosyl-L-methionine = N(3)-methylpseudouridine(1915) in 23S rRNA + S-adenosyl-L-homocysteine + H(+). Its function is as follows. Specifically methylates the pseudouridine at position 1915 (m3Psi1915) in 23S rRNA. In Bifidobacterium adolescentis (strain ATCC 15703 / DSM 20083 / NCTC 11814 / E194a), this protein is Ribosomal RNA large subunit methyltransferase H.